A 587-amino-acid chain; its full sequence is Putative ankyrin repeat protein L66 (587 aa).

16 ANK repeats span residues 77 to 106 (DKNL…DIRI), 108 to 136 (NNYP…DVSD), 137 to 166 (YDNY…DVHC), 168 to 196 (DNAP…DVNY), 199 to 228 (NEDL…NIHF), 230 to 256 (DSLI…ILGN), 259 to 288 (NIRN…SIEN), 302 to 331 (FKKN…NVAF), 333 to 360 (DNLP…NVKI), 361 to 390 (NYEN…NVKD), 392 to 418 (TAIY…DLIK), 420 to 448 (HNEI…INKS), 449 to 478 (IYDK…DIKS), 480 to 507 (KFHD…KINN), 509 to 537 (YKNL…NMKC), and 539 to 567 (RIDT…KLIC).

The polypeptide is Putative ankyrin repeat protein L66 (Acanthamoeba polyphaga mimivirus (APMV)).